Reading from the N-terminus, the 60-residue chain is Sec-independent protein translocase protein TatA (60 aa).

A helical membrane pass occupies residues 1–21 (MLSNIGVPGLILILVIALVIF).

It belongs to the TatA/E family. Forms a complex with TatC.

The protein resides in the cell membrane. Its function is as follows. Part of the twin-arginine translocation (Tat) system that transports large folded proteins containing a characteristic twin-arginine motif in their signal peptide across membranes. TatA could form the protein-conducting channel of the Tat system. The chain is Sec-independent protein translocase protein TatA from Anoxybacillus flavithermus (strain DSM 21510 / WK1).